Consider the following 143-residue polypeptide: Large ribosomal subunit protein uL11 (143 aa).

This sequence belongs to the universal ribosomal protein uL11 family. Part of the ribosomal stalk of the 50S ribosomal subunit. Interacts with L10 and the large rRNA to form the base of the stalk. L10 forms an elongated spine to which L12 dimers bind in a sequential fashion forming a multimeric L10(L12)X complex. Post-translationally, one or more lysine residues are methylated.

In terms of biological role, forms part of the ribosomal stalk which helps the ribosome interact with GTP-bound translation factors. The sequence is that of Large ribosomal subunit protein uL11 from Leptothrix cholodnii (strain ATCC 51168 / LMG 8142 / SP-6) (Leptothrix discophora (strain SP-6)).